The primary structure comprises 296 residues: Coiled-coil domain-containing protein 69 (296 aa).

A compositionally biased stretch (basic residues) spans 1–18; sequence MGCRHSRLSSCKPPKKKR. Positions 1–41 are disordered; it reads MGCRHSRLSSCKPPKKKRQEPEPEQPPRPEPHELGPLNGDT. A lipid anchor (N-myristoyl glycine) is attached at G2. Residues 19–33 show a composition bias toward basic and acidic residues; that stretch reads QEPEPEQPPRPEPHE. Residues 48-272 are a coiled coil; it reads CASEEAERHQ…QEKEELLYRV (225 aa). S154 and S241 each carry phosphoserine.

This sequence belongs to the CCDC69 family. In terms of tissue distribution, highly expressed in duodenum, esophagus, pancreas, prostate, salivary gland, thymus and urinary bladder.

The protein localises to the cytoplasm. Its subcellular location is the cytoskeleton. It localises to the spindle. The protein resides in the midbody. In terms of biological role, may act as a scaffold to regulate the recruitment and assembly of spindle midzone components. Required for the localization of AURKB and PLK1 to the spindle midzone. The polypeptide is Coiled-coil domain-containing protein 69 (Homo sapiens (Human)).